The sequence spans 196 residues: Pentatricopeptide repeat-containing protein At1g62350 (196 aa).

PPR repeat units lie at residues 70-104 (DMFFYRDMLMMLARNKKVDETKKVWEDLKKEEVLF) and 105-139 (DQHTFGDLVRGFLDNELPLEAMRLYGEMRESPDRP).

The protein belongs to the PPR family. P subfamily.

The chain is Pentatricopeptide repeat-containing protein At1g62350 from Arabidopsis thaliana (Mouse-ear cress).